Consider the following 44-residue polypeptide: Protein PsbN (44 aa).

The helical transmembrane segment at 7–29 threads the bilayer; sequence VATVFVSCLVLSITGYSLYIGFG.

It belongs to the PsbN family.

It localises to the plastid. The protein resides in the chloroplast thylakoid membrane. Its function is as follows. May play a role in photosystem I and II biogenesis. This Nephroselmis olivacea (Green alga) protein is Protein PsbN.